Here is a 445-residue protein sequence, read N- to C-terminus: tRNA modification GTPase MnmE (445 aa).

Residues Arg20, Glu79, and Lys119 each contribute to the (6S)-5-formyl-5,6,7,8-tetrahydrofolate site. Positions 215–371 (GLKLAIIGPP…ILKNIENIAE (157 aa)) constitute a TrmE-type G domain. Residue Asn225 participates in K(+) binding. GTP-binding positions include 225-230 (NVGKSS), 244-250 (SNIAGTT), and 269-272 (DTAG). A Mg(2+)-binding site is contributed by Ser229. Ser244, Ile246, and Thr249 together coordinate K(+). Residue Thr250 coordinates Mg(2+). Lys445 contacts (6S)-5-formyl-5,6,7,8-tetrahydrofolate.

This sequence belongs to the TRAFAC class TrmE-Era-EngA-EngB-Septin-like GTPase superfamily. TrmE GTPase family. As to quaternary structure, homodimer. Heterotetramer of two MnmE and two MnmG subunits. K(+) is required as a cofactor.

The protein localises to the cytoplasm. In terms of biological role, exhibits a very high intrinsic GTPase hydrolysis rate. Involved in the addition of a carboxymethylaminomethyl (cmnm) group at the wobble position (U34) of certain tRNAs, forming tRNA-cmnm(5)s(2)U34. The sequence is that of tRNA modification GTPase MnmE from Rickettsia rickettsii (strain Iowa).